The following is a 376-amino-acid chain: Erythronate-4-phosphate dehydrogenase (376 aa).

Ser-45 and Thr-67 together coordinate substrate. Asp-147 is an NAD(+) binding site. Arg-209 is an active-site residue. Asp-233 lines the NAD(+) pocket. Residue Glu-238 is part of the active site. His-255 (proton donor) is an active-site residue. Position 258 (Gly-258) interacts with NAD(+). Tyr-259 lines the substrate pocket.

It belongs to the D-isomer specific 2-hydroxyacid dehydrogenase family. PdxB subfamily. As to quaternary structure, homodimer.

Its subcellular location is the cytoplasm. It catalyses the reaction 4-phospho-D-erythronate + NAD(+) = (R)-3-hydroxy-2-oxo-4-phosphooxybutanoate + NADH + H(+). Its pathway is cofactor biosynthesis; pyridoxine 5'-phosphate biosynthesis; pyridoxine 5'-phosphate from D-erythrose 4-phosphate: step 2/5. In terms of biological role, catalyzes the oxidation of erythronate-4-phosphate to 3-hydroxy-2-oxo-4-phosphonooxybutanoate. The polypeptide is Erythronate-4-phosphate dehydrogenase (Shewanella halifaxensis (strain HAW-EB4)).